The sequence spans 580 residues: Arginine--tRNA ligase (580 aa).

Positions Ala-137–His-147 match the 'HIGH' region motif.

This sequence belongs to the class-I aminoacyl-tRNA synthetase family. Monomer.

The protein localises to the cytoplasm. The enzyme catalyses tRNA(Arg) + L-arginine + ATP = L-arginyl-tRNA(Arg) + AMP + diphosphate. This Anaplasma phagocytophilum (strain HZ) protein is Arginine--tRNA ligase.